A 223-amino-acid polypeptide reads, in one-letter code: TMF-regulated nuclear protein 1 (223 aa).

Disordered stretches follow at residues 1–84 and 196–223; these read MPGC…GPAG and GRLRRGQGPEPDSPFRRSPPRGPASPQR. The span at 21 to 54 shows a compositional bias: pro residues; it reads GSPPPPPREPLPSLQPPSPSPTSTPTPTKSPPLP. Gly residues predominate over residues 73–84; sequence ASGGSGGAGPAG.

Interacts with TMF1; may regulate TRNP1 proteasomal degradation. Post-translationally, ubiquitinated, leading to its degradation by the proteasome. In terms of tissue distribution, expressed in brain and kidney (at protein level). Also detected in spleen and intestine.

The protein localises to the nucleus. Functionally, DNA-binding factor that regulates the expression of a subset of genes and plays a key role in tangential, radial, and lateral expansion of the brain neocortex. Regulates neural stem cells proliferation and the production of intermediate neural progenitors and basal radial glial cells affecting the process of cerebral cortex gyrification. May control the proliferation rate of cells by regulating their progression through key cell-cycle transition points. In Mus musculus (Mouse), this protein is TMF-regulated nuclear protein 1 (Trnp1).